Reading from the N-terminus, the 62-residue chain is Putative antitoxin AF_1095 (62 aa).

Belongs to the UPF0165 family.

In terms of biological role, possibly the antitoxin component of a type II toxin-antitoxin (TA) system. This Archaeoglobus fulgidus (strain ATCC 49558 / DSM 4304 / JCM 9628 / NBRC 100126 / VC-16) protein is Putative antitoxin AF_1095.